Consider the following 280-residue polypeptide: Large ribosomal subunit protein uL2 (280 aa).

Disordered stretches follow at residues 33 to 55 (LTEG…RRRG) and 199 to 266 (DNSN…KASQ). Over residues 209 to 219 (GRMRHKGKRPS) the composition is skewed to basic residues.

Belongs to the universal ribosomal protein uL2 family. As to quaternary structure, part of the 50S ribosomal subunit. Forms a bridge to the 30S subunit in the 70S ribosome.

Its function is as follows. One of the primary rRNA binding proteins. Required for association of the 30S and 50S subunits to form the 70S ribosome, for tRNA binding and peptide bond formation. It has been suggested to have peptidyltransferase activity; this is somewhat controversial. Makes several contacts with the 16S rRNA in the 70S ribosome. This chain is Large ribosomal subunit protein uL2, found in Ruegeria sp. (strain TM1040) (Silicibacter sp.).